The chain runs to 462 residues: Tubby-like F-box protein 7 (462 aa).

One can recognise an F-box domain in the interval 54–109; that stretch reads SKWAGLPPELLRDVMKRLEEDDSNWPSRKDVVACASVCTTWRDMCKDIVRNPEFCG. Disordered stretches follow at residues 317 to 338 and 383 to 418; these read FSEF…DDVN and QPSS…SSSN. The span at 383–417 shows a compositional bias: low complexity; that stretch reads QPSSGAASEPSQAGQAAQQQTQPSQPSSSSSSSSS.

The protein belongs to the TUB family. In terms of tissue distribution, ubiquitous.

The polypeptide is Tubby-like F-box protein 7 (TULP7) (Oryza sativa subsp. japonica (Rice)).